We begin with the raw amino-acid sequence, 372 residues long: Ligninase LG3 (372 aa).

The signal sequence occupies residues 1-21; it reads MAFKQLFAAISLALSLSAANA. A propeptide spanning residues 22 to 28 is cleaved from the precursor; sequence AAVIEKR. Disulfide bonds link Cys31–Cys43 and Cys62–Cys148. The Proton acceptor role is filled by His75. Ca(2+) contacts are provided by Asp76, Gly94, Asp96, and Ser98. Residue His204 coordinates heme b. Positions 205, 222, 224, 227, and 229 each coordinate Ca(2+). Cys277 and Cys345 form a disulfide bridge. N-linked (GlcNAc...) asparagine glycosylation occurs at Asn285. The segment covering 350–361 has biased composition (low complexity); the sequence is FPTLTTLPGPET. Positions 350–372 are disordered; that stretch reads FPTLTTLPGPETSVQRIPPPPGA.

The protein belongs to the peroxidase family. Ligninase subfamily. The cofactor is heme b. Ca(2+) serves as cofactor.

It catalyses the reaction 1-(3,4-dimethoxyphenyl)-2-(2-methoxyphenoxy)propane-1,3-diol + H2O2 = 3,4-dimethoxybenzaldehyde + guaiacol + glycolaldehyde + H2O. The enzyme catalyses 2 (3,4-dimethoxyphenyl)methanol + H2O2 = 2 (3,4-dimethoxyphenyl)methanol radical + 2 H2O. The protein operates within secondary metabolite metabolism; lignin degradation. Depolymerization of lignin. Catalyzes the C(alpha)-C(beta) cleavage of the propyl side chains of lignin. The sequence is that of Ligninase LG3 (GLG3) from Phanerodontia chrysosporium (White-rot fungus).